The chain runs to 80 residues: RNA-binding protein KhpA (80 aa).

In terms of domain architecture, KH spans 33–80; sequence LEILQLRVASEDVGKVIGKHGRIARALRTLLSASAHASQTRYALEIID.

The protein belongs to the KhpA RNA-binding protein family. In terms of assembly, forms a complex with KhpB.

It is found in the cytoplasm. Its function is as follows. A probable RNA chaperone. Forms a complex with KhpB which binds to cellular RNA and controls its expression. Plays a role in peptidoglycan (PG) homeostasis and cell length regulation. The chain is RNA-binding protein KhpA from Treponema pallidum (strain Nichols).